Here is a 129-residue protein sequence, read N- to C-terminus: Small ribosomal subunit protein uS11 (129 aa).

The protein belongs to the universal ribosomal protein uS11 family. Part of the 30S ribosomal subunit. Interacts with proteins S7 and S18. Binds to IF-3.

In terms of biological role, located on the platform of the 30S subunit, it bridges several disparate RNA helices of the 16S rRNA. Forms part of the Shine-Dalgarno cleft in the 70S ribosome. The protein is Small ribosomal subunit protein uS11 of Bacillus anthracis (strain A0248).